Consider the following 527-residue polypeptide: UDP-glucuronosyltransferase 2A3 (527 aa).

The signal sequence occupies residues 1–23 (MRSDKSALVFLLLQLFCVGCGFC). Topologically, residues 24–491 (GKVLVWPCDM…TWFQHYSIDV (468 aa)) are extracellular. Asn-313 carries N-linked (GlcNAc...) asparagine glycosylation. Residues 492–512 (IGFLLACVATAIFLFTKCFLF) form a helical membrane-spanning segment. The Cytoplasmic portion of the chain corresponds to 513–527 (SCQKFNKTRKIEKRE).

This sequence belongs to the UDP-glycosyltransferase family.

It is found in the membrane. It carries out the reaction glucuronate acceptor + UDP-alpha-D-glucuronate = acceptor beta-D-glucuronoside + UDP + H(+). Functionally, UDP-glucuronosyltransferases catalyze phase II biotransformation reactions in which lipophilic substrates are conjugated with glucuronic acid to increase water solubility and enhance excretion. They are of major importance in the conjugation and subsequent elimination of potentially toxic xenobiotics and endogenous compounds. The protein is UDP-glucuronosyltransferase 2A3 (UGT2A3) of Homo sapiens (Human).